The chain runs to 360 residues: Heat-inducible transcription repressor HrcA (360 aa).

It belongs to the HrcA family.

In terms of biological role, negative regulator of class I heat shock genes (grpE-dnaK-dnaJ and groELS operons). Prevents heat-shock induction of these operons. The polypeptide is Heat-inducible transcription repressor HrcA (Gloeobacter violaceus (strain ATCC 29082 / PCC 7421)).